The primary structure comprises 126 residues: Ribonuclease VapC23 (126 aa).

Residues 2–118 (IFVDTNVFMY…GVTRIKTFDH (117 aa)) form the PINc domain. Asp-5 and Asp-98 together coordinate Mg(2+).

It belongs to the PINc/VapC protein family. It depends on Mg(2+) as a cofactor.

Functionally, toxic component of a type II toxin-antitoxin (TA) system. An RNase. The cognate antitoxin is VapB23. The sequence is that of Ribonuclease VapC23 from Mycobacterium tuberculosis (strain CDC 1551 / Oshkosh).